Consider the following 661-residue polypeptide: Threonine--tRNA ligase (661 aa).

The TGS domain maps to 1–64 (MSHSVSLTFP…ADGKIEIVTR (64 aa)). A catalytic region spans residues 245-547 (DHRRLGREMD…LLENYAGHMP (303 aa)). Residues cysteine 341, histidine 392, and histidine 524 each coordinate Zn(2+).

This sequence belongs to the class-II aminoacyl-tRNA synthetase family. In terms of assembly, homodimer. Zn(2+) is required as a cofactor.

The protein localises to the cytoplasm. The enzyme catalyses tRNA(Thr) + L-threonine + ATP = L-threonyl-tRNA(Thr) + AMP + diphosphate + H(+). In terms of biological role, catalyzes the attachment of threonine to tRNA(Thr) in a two-step reaction: L-threonine is first activated by ATP to form Thr-AMP and then transferred to the acceptor end of tRNA(Thr). Also edits incorrectly charged L-seryl-tRNA(Thr). This is Threonine--tRNA ligase from Sinorhizobium fredii (strain NBRC 101917 / NGR234).